We begin with the raw amino-acid sequence, 522 residues long: Maturase K (522 aa).

The protein belongs to the intron maturase 2 family. MatK subfamily.

Its subcellular location is the plastid. It localises to the chloroplast. Usually encoded in the trnK tRNA gene intron. Probably assists in splicing its own and other chloroplast group II introns. This is Maturase K from Iris domestica (Leopard lily).